The following is a 171-amino-acid chain: Protein TIFY 11d (171 aa).

The Tify domain occupies 65–100; the sequence is PSAGTAPLTIFYDGRMVVVDDVPVEKAAELMRLAGS. The Jas signature appears at 117 to 142; that stretch reads PIARKASLQRFLQKRKHRITTTSEPY. Residues 119-126 carry the Nuclear localization signal motif; sequence ARKASLQR.

Belongs to the TIFY/JAZ family. In terms of assembly, interacts with BHLH148 and COI1A. Interacts with COI1A, COI1B and COI2 in a coronatine-dependent manner. Coronatine is an analog of jasmonoyl isoleucine (JA-Ile). Ubiquitinated. Increase in jasmonoyl isoleucine (JA-Ile) levels mediates its degradation via COI1A-mediated proteasome pathway.

The protein localises to the nucleus. In terms of biological role, repressor of jasmonate (JA) responses. May act on an initial response of JA-regulated gene expression toward drought tolerance as part of a BHLH148-TIFY11D/JAZ12-COI1A complex. The chain is Protein TIFY 11d from Oryza sativa subsp. japonica (Rice).